The sequence spans 335 residues: Holliday junction branch migration complex subunit RuvB (335 aa).

Positions 4 to 184 are large ATPase domain (RuvB-L); sequence ADRLIQPTAL…FGIVQRLEFY (181 aa). ATP-binding positions include isoleucine 23, arginine 24, glycine 65, lysine 68, threonine 69, threonine 70, 131–133, arginine 174, tyrosine 184, and arginine 221; that span reads EDY. Threonine 69 provides a ligand contact to Mg(2+). Residues 185–255 are small ATPAse domain (RuvB-S); it reads NIKDLTQIVK…VASAALDMLD (71 aa). The head domain (RuvB-H) stretch occupies residues 258–335; sequence KEGFDYMDRK…LHFGYDYEPN (78 aa). Positions 294, 313, and 318 each coordinate DNA.

It belongs to the RuvB family. Homohexamer. Forms an RuvA(8)-RuvB(12)-Holliday junction (HJ) complex. HJ DNA is sandwiched between 2 RuvA tetramers; dsDNA enters through RuvA and exits via RuvB. An RuvB hexamer assembles on each DNA strand where it exits the tetramer. Each RuvB hexamer is contacted by two RuvA subunits (via domain III) on 2 adjacent RuvB subunits; this complex drives branch migration. In the full resolvosome a probable DNA-RuvA(4)-RuvB(12)-RuvC(2) complex forms which resolves the HJ.

The protein localises to the cytoplasm. It carries out the reaction ATP + H2O = ADP + phosphate + H(+). In terms of biological role, the RuvA-RuvB-RuvC complex processes Holliday junction (HJ) DNA during genetic recombination and DNA repair, while the RuvA-RuvB complex plays an important role in the rescue of blocked DNA replication forks via replication fork reversal (RFR). RuvA specifically binds to HJ cruciform DNA, conferring on it an open structure. The RuvB hexamer acts as an ATP-dependent pump, pulling dsDNA into and through the RuvAB complex. RuvB forms 2 homohexamers on either side of HJ DNA bound by 1 or 2 RuvA tetramers; 4 subunits per hexamer contact DNA at a time. Coordinated motions by a converter formed by DNA-disengaged RuvB subunits stimulates ATP hydrolysis and nucleotide exchange. Immobilization of the converter enables RuvB to convert the ATP-contained energy into a lever motion, pulling 2 nucleotides of DNA out of the RuvA tetramer per ATP hydrolyzed, thus driving DNA branch migration. The RuvB motors rotate together with the DNA substrate, which together with the progressing nucleotide cycle form the mechanistic basis for DNA recombination by continuous HJ branch migration. Branch migration allows RuvC to scan DNA until it finds its consensus sequence, where it cleaves and resolves cruciform DNA. This Pseudoalteromonas atlantica (strain T6c / ATCC BAA-1087) protein is Holliday junction branch migration complex subunit RuvB.